The sequence spans 57 residues: Potassium channel toxin alpha-KTx 26.1 (57 aa).

Residues 1–22 (MSRLFVFILIALFLSAIIDVMS) form the signal peptide. Cystine bridges form between cysteine 30/cysteine 48, cysteine 34/cysteine 53, and cysteine 38/cysteine 55.

Belongs to the short scorpion toxin superfamily. Potassium channel inhibitor family. Alpha-KTx 26 subfamily. In terms of tissue distribution, expressed by the venom gland.

It is found in the secreted. Recombinant toxin that reversibly inhibits the potassium current of mKv1.3/KCNA3 channel stably expressed in COS7 cells (IC(50)=150 nM). Also shows a weak inhibition on Kv1.2/KCNA2, Kv1.3/KCNA3 and TRPV1 channels. This Olivierus martensii (Manchurian scorpion) protein is Potassium channel toxin alpha-KTx 26.1.